Here is a 226-residue protein sequence, read N- to C-terminus: Glutathione S-transferase kappa 1 (226 aa).

Residues S15 to Y17, N53, and S199 to D200 contribute to the glutathione site.

The protein belongs to the GST superfamily. Kappa family.

It carries out the reaction RX + glutathione = an S-substituted glutathione + a halide anion + H(+). The protein is Glutathione S-transferase kappa 1 (gstk-1) of Caenorhabditis elegans.